Here is a 695-residue protein sequence, read N- to C-terminus: UvrABC system protein B (695 aa).

Residues 45–434 enclose the Helicase ATP-binding domain; the sequence is EGIEDGLSFQ…QVVEQVVRPT (390 aa). ATP is bound at residue 58–65; that stretch reads GVTGSGKT. The Beta-hairpin motif lies at 111-134; that stretch reads YYDYYQPEAYVPQRDLFIEKDSSI. Residues 449-602 form the Helicase C-terminal domain; it reads QVDDLLSEIN…QMAFNEANGI (154 aa). The region spanning 646–681 is the UVR domain; the sequence is SKEIKRLEKLMMDHAKNLEFEKAAQVRDQLAKLKAQ.

The protein belongs to the UvrB family. As to quaternary structure, forms a heterotetramer with UvrA during the search for lesions. Interacts with UvrC in an incision complex.

It is found in the cytoplasm. In terms of biological role, the UvrABC repair system catalyzes the recognition and processing of DNA lesions. A damage recognition complex composed of 2 UvrA and 2 UvrB subunits scans DNA for abnormalities. Upon binding of the UvrA(2)B(2) complex to a putative damaged site, the DNA wraps around one UvrB monomer. DNA wrap is dependent on ATP binding by UvrB and probably causes local melting of the DNA helix, facilitating insertion of UvrB beta-hairpin between the DNA strands. Then UvrB probes one DNA strand for the presence of a lesion. If a lesion is found the UvrA subunits dissociate and the UvrB-DNA preincision complex is formed. This complex is subsequently bound by UvrC and the second UvrB is released. If no lesion is found, the DNA wraps around the other UvrB subunit that will check the other stand for damage. The sequence is that of UvrABC system protein B from Cupriavidus pinatubonensis (strain JMP 134 / LMG 1197) (Cupriavidus necator (strain JMP 134)).